The sequence spans 356 residues: MSMGLTFLGIESSCDDTAAAVVRDDRSILASVVAGQAALHADFGGVVPEIAARAHAEKLDLCVEEALAQAGLRLSDLDGIAVTAGPGLIGGVLSGVMLAKGLAAGTGLPLVGVNHLAGHALTPRLTDGTPYPYLMLLVSGGHCQFLRVDGPEDFTRLGGTIDDAPGEAFDKVAKLLGLPQPGGPSVEAAARAGDARRFALPRPLLDRPGCDLSFSGLKTAVLRQRDELVAAQGGLHEQDRADLCAGFQAAVAEVLAEKTRRALALAPAPVLAAAGGVAANQTLRTALQAVAAEAGATFLAPPLRLCTDNAAMIAWAGIEAYEAGRRDGMDLAARPRWPLDQRAAPMLGAGKRGAKA.

Residues H115 and H119 each coordinate Fe cation. Substrate-binding positions include 137–141 (LVSGG), D170, G183, and N280. Residue D308 coordinates Fe cation.

Belongs to the KAE1 / TsaD family. Fe(2+) serves as cofactor.

The protein resides in the cytoplasm. The catalysed reaction is L-threonylcarbamoyladenylate + adenosine(37) in tRNA = N(6)-L-threonylcarbamoyladenosine(37) in tRNA + AMP + H(+). In terms of biological role, required for the formation of a threonylcarbamoyl group on adenosine at position 37 (t(6)A37) in tRNAs that read codons beginning with adenine. Is involved in the transfer of the threonylcarbamoyl moiety of threonylcarbamoyl-AMP (TC-AMP) to the N6 group of A37, together with TsaE and TsaB. TsaD likely plays a direct catalytic role in this reaction. This is tRNA N6-adenosine threonylcarbamoyltransferase from Paracoccus denitrificans (strain Pd 1222).